The primary structure comprises 292 residues: MAAITASMVAELRAKTDAPMMECKKALTEADGDLDKAEELLRVKLGNKASKAASRVTAEGVVASFIDGTTGVLVELNCETDFVSKNDDFLAFSAKVAELIAKQNPADVAALSALEIDGVSVEATRTALIGKIGENLTIRRFARYANGGKLVSYLHGTRIGVMVEFDGDEAAAKDVAMHVAAMKPVSLSAEQVPADLIAKERSIAEQKAAESGKPAEIVAKMVEGSVQKYLKEVSLFNQPFVKNDKQTVEQMLKAANTTVKGFTLFVVGEGIEKKQDDFAAEVAAQVAAAQKG.

Positions 80-83 (TDFV) are involved in Mg(2+) ion dislocation from EF-Tu.

It belongs to the EF-Ts family.

The protein localises to the cytoplasm. Associates with the EF-Tu.GDP complex and induces the exchange of GDP to GTP. It remains bound to the aminoacyl-tRNA.EF-Tu.GTP complex up to the GTP hydrolysis stage on the ribosome. This Cupriavidus necator (strain ATCC 17699 / DSM 428 / KCTC 22496 / NCIMB 10442 / H16 / Stanier 337) (Ralstonia eutropha) protein is Elongation factor Ts.